Consider the following 67-residue polypeptide: uncharacterized protein (67 aa).

This is an uncharacterized protein from Vaccinia virus (strain Copenhagen) (VACV).